Reading from the N-terminus, the 145-residue chain is D-aminoacyl-tRNA deacylase (145 aa).

The Gly-cisPro motif, important for rejection of L-amino acids signature appears at 137–138 (GP).

This sequence belongs to the DTD family. In terms of assembly, homodimer.

The protein resides in the cytoplasm. The enzyme catalyses glycyl-tRNA(Ala) + H2O = tRNA(Ala) + glycine + H(+). It catalyses the reaction a D-aminoacyl-tRNA + H2O = a tRNA + a D-alpha-amino acid + H(+). An aminoacyl-tRNA editing enzyme that deacylates mischarged D-aminoacyl-tRNAs. Also deacylates mischarged glycyl-tRNA(Ala), protecting cells against glycine mischarging by AlaRS. Acts via tRNA-based rather than protein-based catalysis; rejects L-amino acids rather than detecting D-amino acids in the active site. By recycling D-aminoacyl-tRNA to D-amino acids and free tRNA molecules, this enzyme counteracts the toxicity associated with the formation of D-aminoacyl-tRNA entities in vivo and helps enforce protein L-homochirality. This Yersinia pestis bv. Antiqua (strain Antiqua) protein is D-aminoacyl-tRNA deacylase.